The primary structure comprises 188 residues: Deoxyuridine 5'-triphosphate nucleotidohydrolase (188 aa).

Positions Met1–Ile34 are disordered.

Belongs to the dUTPase family. Requires Mg(2+) as cofactor.

It carries out the reaction dUTP + H2O = dUMP + diphosphate + H(+). In terms of biological role, this enzyme is involved in nucleotide metabolism: it produces dUMP, the immediate precursor of thymidine nucleotides and it decreases the intracellular concentration of dUTP so that uracil cannot be incorporated into DNA. This is Deoxyuridine 5'-triphosphate nucleotidohydrolase (49) from Ictaluridae (bullhead catfishes).